Here is a 479-residue protein sequence, read N- to C-terminus: Endo-beta-1,6-galactanase (479 aa).

The signal sequence occupies residues 1 to 20 (MRSIVLPSLALALFSQRARA). An N-linked (GlcNAc...) asparagine glycan is attached at asparagine 89. Glutamate 210 (proton donor) is an active-site residue. Asparagine 271 carries N-linked (GlcNAc...) asparagine glycosylation. Glutamate 311 acts as the Nucleophile in catalysis. N-linked (GlcNAc...) asparagine glycosylation is present at asparagine 358.

It catalyses the reaction Endohydrolysis of (1-&gt;6)-beta-D-galactosidic linkages in arabinogalactan proteins and (1-&gt;3):(1-&gt;6)-beta-galactans to yield galactose and beta-(1-&gt;6)-galactaobiose as the final products.. Functionally, hydrolyzes galactooligomers with a degree of polymerization higher than 3. Hydrolyzes radish root arabinogalactan-protein. Does not hydrolyze dextran, arabinan, starch, laminarin, beta-1,4- and beta-1,3-galactans, larch wood arabinogalactan or acid-insoluble polygalacturonic acid. The chain is Endo-beta-1,6-galactanase from Hypocrea rufa (Trichoderma viride).